The chain runs to 387 residues: Protein NDRG3 (387 aa).

The segment at 329–387 (PSASMTRLVRSRTHSASSSGSMEMPRSRSHTSNAQLQSTSNNSLSNQIQETPHTIELSC) is disordered. A compositionally biased stretch (low complexity) spans 359–377 (TSNAQLQSTSNNSLSNQIQ).

This sequence belongs to the NDRG family.

This is Protein NDRG3 from Xenopus tropicalis (Western clawed frog).